A 557-amino-acid chain; its full sequence is Formate--tetrahydrofolate ligase (557 aa).

65–72 (TPAGEGKT) contributes to the ATP binding site.

Belongs to the formate--tetrahydrofolate ligase family.

It carries out the reaction (6S)-5,6,7,8-tetrahydrofolate + formate + ATP = (6R)-10-formyltetrahydrofolate + ADP + phosphate. The protein operates within one-carbon metabolism; tetrahydrofolate interconversion. The sequence is that of Formate--tetrahydrofolate ligase from Methylorubrum extorquens (strain CM4 / NCIMB 13688) (Methylobacterium extorquens).